The primary structure comprises 523 residues: 2-isopropylmalate synthase (523 aa).

A Pyruvate carboxyltransferase domain is found at 5-267 (VIIFDTTLRD…HTRINHQEIW (263 aa)). Residues D14, H202, H204, and N238 each contribute to the Mn(2+) site. Residues 392 to 523 (RLDYFSVQSG…QNKENNKETV (132 aa)) are regulatory domain.

This sequence belongs to the alpha-IPM synthase/homocitrate synthase family. LeuA type 1 subfamily. In terms of assembly, homodimer. Mn(2+) is required as a cofactor.

The protein localises to the cytoplasm. It catalyses the reaction 3-methyl-2-oxobutanoate + acetyl-CoA + H2O = (2S)-2-isopropylmalate + CoA + H(+). It functions in the pathway amino-acid biosynthesis; L-leucine biosynthesis; L-leucine from 3-methyl-2-oxobutanoate: step 1/4. Its function is as follows. Catalyzes the condensation of the acetyl group of acetyl-CoA with 3-methyl-2-oxobutanoate (2-ketoisovalerate) to form 3-carboxy-3-hydroxy-4-methylpentanoate (2-isopropylmalate). This chain is 2-isopropylmalate synthase, found in Citrobacter koseri (strain ATCC BAA-895 / CDC 4225-83 / SGSC4696).